We begin with the raw amino-acid sequence, 392 residues long: Formate-dependent phosphoribosylglycinamide formyltransferase (392 aa).

Residues 15–16 (EL) and glutamate 75 contribute to the N(1)-(5-phospho-beta-D-ribosyl)glycinamide site. ATP contacts are provided by residues arginine 107, lysine 148, 153-158 (SSGKGQ), 188-191 (EEFL), and glutamate 196. The ATP-grasp domain occupies 112 to 302 (DLASGELGLH…EFELHLRAVL (191 aa)). Positions 261 and 273 each coordinate Mg(2+). Residues aspartate 280, lysine 350, and 357–358 (RR) each bind N(1)-(5-phospho-beta-D-ribosyl)glycinamide.

Belongs to the PurK/PurT family. Homodimer.

The enzyme catalyses N(1)-(5-phospho-beta-D-ribosyl)glycinamide + formate + ATP = N(2)-formyl-N(1)-(5-phospho-beta-D-ribosyl)glycinamide + ADP + phosphate + H(+). It participates in purine metabolism; IMP biosynthesis via de novo pathway; N(2)-formyl-N(1)-(5-phospho-D-ribosyl)glycinamide from N(1)-(5-phospho-D-ribosyl)glycinamide (formate route): step 1/1. Its function is as follows. Involved in the de novo purine biosynthesis. Catalyzes the transfer of formate to 5-phospho-ribosyl-glycinamide (GAR), producing 5-phospho-ribosyl-N-formylglycinamide (FGAR). Formate is provided by PurU via hydrolysis of 10-formyl-tetrahydrofolate. This Synechococcus sp. (strain CC9902) protein is Formate-dependent phosphoribosylglycinamide formyltransferase.